Consider the following 108-residue polypeptide: Iron-sulfur cluster assembly protein CyaY (108 aa).

The protein belongs to the frataxin family.

In terms of biological role, involved in iron-sulfur (Fe-S) cluster assembly. May act as a regulator of Fe-S biogenesis. The protein is Iron-sulfur cluster assembly protein CyaY of Burkholderia orbicola (strain MC0-3).